The primary structure comprises 220 residues: ATP-dependent dethiobiotin synthetase BioD (220 aa).

Glutamate 13–valine 18 contributes to the ATP binding site. Threonine 17 is a Mg(2+) binding site. Lysine 38 is an active-site residue. Position 42 (serine 42) interacts with substrate. Residues aspartate 55, glutamate 116–glycine 119, asparagine 176–arginine 177, and asparagine 212 each bind ATP. 2 residues coordinate Mg(2+): aspartate 55 and glutamate 116.

The protein belongs to the dethiobiotin synthetase family. In terms of assembly, homodimer. Requires Mg(2+) as cofactor.

Its subcellular location is the cytoplasm. The catalysed reaction is (7R,8S)-7,8-diammoniononanoate + CO2 + ATP = (4R,5S)-dethiobiotin + ADP + phosphate + 3 H(+). The protein operates within cofactor biosynthesis; biotin biosynthesis; biotin from 7,8-diaminononanoate: step 1/2. In terms of biological role, catalyzes a mechanistically unusual reaction, the ATP-dependent insertion of CO2 between the N7 and N8 nitrogen atoms of 7,8-diaminopelargonic acid (DAPA, also called 7,8-diammoniononanoate) to form a ureido ring. In Photobacterium profundum (strain SS9), this protein is ATP-dependent dethiobiotin synthetase BioD.